A 120-amino-acid polypeptide reads, in one-letter code: Protein GP96 (120 aa).

This sequence belongs to the herpesviridae UL96 family.

The sequence is that of Protein GP96 from Cavia porcellus (Guinea pig).